We begin with the raw amino-acid sequence, 189 residues long: Peptidyl-tRNA hydrolase (189 aa).

His15 provides a ligand contact to tRNA. Residue His20 is the Proton acceptor of the active site. Residues Phe66, Asn68, and Asn114 each contribute to the tRNA site.

Belongs to the PTH family. Monomer.

It localises to the cytoplasm. It catalyses the reaction an N-acyl-L-alpha-aminoacyl-tRNA + H2O = an N-acyl-L-amino acid + a tRNA + H(+). Its function is as follows. Hydrolyzes ribosome-free peptidyl-tRNAs (with 1 or more amino acids incorporated), which drop off the ribosome during protein synthesis, or as a result of ribosome stalling. Catalyzes the release of premature peptidyl moieties from peptidyl-tRNA molecules trapped in stalled 50S ribosomal subunits, and thus maintains levels of free tRNAs and 50S ribosomes. The sequence is that of Peptidyl-tRNA hydrolase from Streptococcus equi subsp. equi (strain 4047).